A 318-amino-acid polypeptide reads, in one-letter code: Malate dehydrogenase (318 aa).

Residues 10–15 and Asp34 contribute to the NAD(+) site; that span reads GGGQIG. Residues Arg83 and Arg89 each coordinate substrate. NAD(+)-binding positions include Asn96 and 119–121; that span reads LSN. Residues Asn121 and Arg152 each coordinate substrate. Catalysis depends on His176, which acts as the Proton acceptor.

Belongs to the LDH/MDH superfamily. MDH type 3 family.

The enzyme catalyses (S)-malate + NAD(+) = oxaloacetate + NADH + H(+). Its function is as follows. Catalyzes the reversible oxidation of malate to oxaloacetate. The polypeptide is Malate dehydrogenase (Syntrophotalea carbinolica (strain DSM 2380 / NBRC 103641 / GraBd1) (Pelobacter carbinolicus)).